Reading from the N-terminus, the 305-residue chain is Protein FdhE homolog (305 aa).

This sequence belongs to the FdhE family.

It localises to the cytoplasm. Necessary for formate dehydrogenase activity. This chain is Protein FdhE homolog, found in Actinobacillus pleuropneumoniae serotype 7 (strain AP76).